Reading from the N-terminus, the 166-residue chain is Phosphodiesterase MJ0936 (166 aa).

The Mn(2+) site is built by Asp8, His10, Asp36, Asn59, His97, His120, and His122. The Ni(2+) site is built by Asp8, His10, Asp36, Asn59, His97, His120, and His122.

It belongs to the metallophosphoesterase superfamily. YfcE family. As to quaternary structure, monomer. Requires Ni(2+) as cofactor. The cofactor is Mn(2+).

Its activity is regulated as follows. Competitively inhibited by phosphate. In terms of biological role, shows phosphodiesterase activity. Hydrolyzes phosphodiesters bonds in the artificial chromogenic substrates bis-p-nitrophenyl phosphate (bis-pNPP), and less efficiently thymidine 5'-monophosphate p-nitrophenyl ester (pNP-TMP) and p-nitrophenylphosphorylcholine (pNPPC). No catalytic activity was found toward cAMP or cGMP, nucleotides or phospholipase substrates such as phosphatidylcholine. The physiological substrate is unknown. The protein is Phosphodiesterase MJ0936 of Methanocaldococcus jannaschii (strain ATCC 43067 / DSM 2661 / JAL-1 / JCM 10045 / NBRC 100440) (Methanococcus jannaschii).